Consider the following 368-residue polypeptide: N-acetylneuraminate epimerase (368 aa).

The first 19 residues, 1–19 (MNKTITALTIIMASFATNA), serve as a signal peptide directing secretion. Kelch repeat units follow at residues 40–84 (TVYI…AFID), 86–137 (NLYV…FVHN), 139–173 (KAYVTGGVNQNIFNGYFEDLNEAGKDSTTIDKINA), 174–219 (HYFD…VNKG), 222–265 (TWLI…VAGG), 287–336 (ENYQ…PWNN), and 338–367 (LLIIGGETAGGKAVTDSVLISVKDNKVTVQ). Glu228 (proton acceptor) is an active-site residue.

The protein belongs to the NanM family. As to quaternary structure, homodimer.

It is found in the periplasm. The catalysed reaction is N-acetyl-alpha-neuraminate = N-acetyl-beta-neuraminate. Functionally, converts alpha-N-acetylneuranimic acid (Neu5Ac) to the beta-anomer, accelerating the equilibrium between the alpha- and beta-anomers. Probably facilitates sialidase-negative bacteria to compete successfully for limited amounts of extracellular Neu5Ac, which is likely taken up in the beta-anomer. In addition, the rapid removal of sialic acid from solution might be advantageous to the bacterium to damp down host responses. The sequence is that of N-acetylneuraminate epimerase from Escherichia coli O1:K1 / APEC.